The primary structure comprises 699 residues: Macoilin-2 (699 aa).

The next 4 helical transmembrane spans lie at 28–48 (TFLY…DFVL), 75–95 (AFSV…LLFI), 120–140 (VCLP…AIRF), and 154–174 (FAAH…KSYV). 4 disordered regions span residues 219 to 289 (AAAA…SILP), 322 to 411 (LLKD…PNNQ), 432 to 451 (LQAS…SLGT), and 679 to 699 (FMDT…PLKK). 4 N-linked (GlcNAc...) asparagine glycosylation sites follow: Asn241, Asn267, Asn345, and Asn365. Positions 257–271 (LEYREKERGKNESKK) are enriched in basic and acidic residues. The span at 329 to 346 (SSSSSSTSSNSNKNYKNA) shows a compositional bias: low complexity. Over residues 366 to 382 (GSVPSSSGPSSSASSSS) the composition is skewed to low complexity. An N-linked (GlcNAc...) asparagine glycan is attached at Asn690.

The protein belongs to the macoilin family.

It is found in the nucleus membrane. It localises to the cell projection. Its subcellular location is the axon. The protein resides in the rough endoplasmic reticulum membrane. Its function is as follows. May play a role in the regulation of neuronal activity. This is Macoilin-2 from Danio rerio (Zebrafish).